We begin with the raw amino-acid sequence, 502 residues long: ATP synthase subunit alpha (502 aa).

169–176 (GDRQTGKT) contributes to the ATP binding site.

Belongs to the ATPase alpha/beta chains family. In terms of assembly, F-type ATPases have 2 components, CF(1) - the catalytic core - and CF(0) - the membrane proton channel. CF(1) has five subunits: alpha(3), beta(3), gamma(1), delta(1), epsilon(1). CF(0) has three main subunits: a(1), b(2) and c(9-12). The alpha and beta chains form an alternating ring which encloses part of the gamma chain. CF(1) is attached to CF(0) by a central stalk formed by the gamma and epsilon chains, while a peripheral stalk is formed by the delta and b chains.

It localises to the cell inner membrane. The enzyme catalyses ATP + H2O + 4 H(+)(in) = ADP + phosphate + 5 H(+)(out). Its function is as follows. Produces ATP from ADP in the presence of a proton gradient across the membrane. The alpha chain is a regulatory subunit. This chain is ATP synthase subunit alpha, found in Geobacter sp. (strain M21).